The following is a 101-amino-acid chain: MKLAILTVLLLGAAVLCLGSKDADHSNSVGESHSSEAFISRQESASFARLKRSYGNNVGQGAAVGSPLESQREVCELNPDCDELADHIGFQEAYRRFYGPV.

An N-terminal signal peptide occupies residues 1–19 (MKLAILTVLLLGAAVLCLG). The propeptide occupies 20-52 (SKDADHSNSVGESHSSEAFISRQESASFARLKR). A Gla domain is found at 53–99 (SYGNNVGQGAAVGSPLESQREVCELNPDCDELADHIGFQEAYRRFYG). Ca(2+) contacts are provided by glutamate 69, glutamate 73, glutamate 76, and aspartate 82. 4-carboxyglutamate is present on residues glutamate 69, glutamate 73, and glutamate 76. Cysteine 75 and cysteine 81 are oxidised to a cystine.

This sequence belongs to the osteocalcin/matrix Gla protein family. Gamma-carboxyglutamate residues are formed by vitamin K dependent carboxylation by GGCX. These residues are essential for the binding of calcium.

The protein resides in the secreted. Functionally, the carboxylated form is one of the main organic components of the bone matrix, which constitutes 1-2% of the total bone protein. The carboxylated form binds strongly to apatite and calcium. In Xenopus laevis (African clawed frog), this protein is Osteocalcin (bglap).